A 247-amino-acid chain; its full sequence is DNA polymerase sliding clamp 1 (247 aa).

Belongs to the PCNA family. Homotrimer. The subunits circularize to form a toroid; DNA passes through its center. Replication factor C (RFC) is required to load the toroid on the DNA.

Functionally, sliding clamp subunit that acts as a moving platform for DNA processing. Responsible for tethering the catalytic subunit of DNA polymerase and other proteins to DNA during high-speed replication. This is DNA polymerase sliding clamp 1 from Sulfolobus acidocaldarius (strain ATCC 33909 / DSM 639 / JCM 8929 / NBRC 15157 / NCIMB 11770).